Here is an 897-residue protein sequence, read N- to C-terminus: Leucine--tRNA ligase (897 aa).

The short motif at 42–52 (PYPSGKLHMGH) is the 'HIGH' region element. A 'KMSKS' region motif is present at residues 645–649 (TMSKS). K648 contributes to the ATP binding site.

Belongs to the class-I aminoacyl-tRNA synthetase family.

It localises to the cytoplasm. It catalyses the reaction tRNA(Leu) + L-leucine + ATP = L-leucyl-tRNA(Leu) + AMP + diphosphate. This Paracidovorax citrulli (strain AAC00-1) (Acidovorax citrulli) protein is Leucine--tRNA ligase.